The following is a 178-amino-acid chain: Large ribosomal subunit protein uL6 (178 aa).

Belongs to the universal ribosomal protein uL6 family. In terms of assembly, part of the 50S ribosomal subunit.

Functionally, this protein binds to the 23S rRNA, and is important in its secondary structure. It is located near the subunit interface in the base of the L7/L12 stalk, and near the tRNA binding site of the peptidyltransferase center. The sequence is that of Large ribosomal subunit protein uL6 from Tropheryma whipplei (strain TW08/27) (Whipple's bacillus).